Consider the following 62-residue polypeptide: Trypsin inhibitor MCI-3 (62 aa).

The protein belongs to the protease inhibitor I13 (potato type I serine protease inhibitor) family.

In Momordica charantia (Bitter gourd), this protein is Trypsin inhibitor MCI-3.